Here is a 292-residue protein sequence, read N- to C-terminus: GTP cyclohydrolase FolE2 (292 aa).

The protein belongs to the GTP cyclohydrolase IV family.

It catalyses the reaction GTP + H2O = 7,8-dihydroneopterin 3'-triphosphate + formate + H(+). It participates in cofactor biosynthesis; 7,8-dihydroneopterin triphosphate biosynthesis; 7,8-dihydroneopterin triphosphate from GTP: step 1/1. Converts GTP to 7,8-dihydroneopterin triphosphate. This is GTP cyclohydrolase FolE2 from Staphylococcus aureus (strain Newman).